We begin with the raw amino-acid sequence, 485 residues long: Proline--tRNA ligase (485 aa).

This sequence belongs to the class-II aminoacyl-tRNA synthetase family. ProS type 3 subfamily. As to quaternary structure, homodimer.

The protein localises to the cytoplasm. The enzyme catalyses tRNA(Pro) + L-proline + ATP = L-prolyl-tRNA(Pro) + AMP + diphosphate. In terms of biological role, catalyzes the attachment of proline to tRNA(Pro) in a two-step reaction: proline is first activated by ATP to form Pro-AMP and then transferred to the acceptor end of tRNA(Pro). The sequence is that of Proline--tRNA ligase from Aeropyrum pernix (strain ATCC 700893 / DSM 11879 / JCM 9820 / NBRC 100138 / K1).